The chain runs to 391 residues: Period circadian protein (391 aa).

Disordered stretches follow at residues 27–121 (VTAP…PPVT), 163–188 (MLEY…WEGE), 241–270 (GSSA…QFTQ), and 328–357 (SPSG…TSQA). Gly residues predominate over residues 93 to 114 (GTSGTGNSGDGGGGGGADGPGS). Residues 241-255 (GSSAGGNGSGTGNNN) are compositionally biased toward gly residues.

Forms a heterodimer with timeless (TIM); the complex then translocates into the nucleus. Post-translationally, phosphorylated with a circadian rhythmicity, probably by the double-time protein (dbt). Phosphorylation could be implicated in the stability of per monomer and in the formation of heterodimer per-tim.

It localises to the nucleus. The protein localises to the cytoplasm. Its subcellular location is the perinuclear region. Functionally, essential for biological clock functions. Determines the period length of circadian and ultradian rhythms; an increase in PER dosage leads to shortened circadian rhythms and a decrease leads to lengthened circadian rhythms. Essential for the circadian rhythmicity of locomotor activity, eclosion behavior, and for the rhythmic component of the male courtship song that originates in the thoracic nervous system. The biological cycle depends on the rhythmic formation and nuclear localization of the TIM-PER complex. Light induces the degradation of TIM, which promotes elimination of PER. Nuclear activity of the heterodimer coordinatively regulates PER and TIM transcription through a negative feedback loop. Behaves as a negative element in circadian transcriptional loop. Does not appear to bind DNA, suggesting indirect transcriptional inhibition. In Drosophila insularis (Fruit fly), this protein is Period circadian protein (per).